The sequence spans 374 residues: Glyceraldehyde-3-phosphate dehydrogenase A, chloroplastic (374 aa).

The transit peptide at 1–34 (MAAMMQKSAFTGSAVSSKSGVRAKAARAVVDVRA) directs the protein to the chloroplast. Residues 47-48 (RI), aspartate 71, and arginine 116 contribute to the NADP(+) site. Cysteine 55 and cysteine 325 are oxidised to a cystine. Residues 189-191 (SCT), threonine 220, arginine 235, 248-249 (TG), and arginine 271 each bind D-glyceraldehyde 3-phosphate. Cysteine 190 functions as the Nucleophile in the catalytic mechanism. Asparagine 353 serves as a coordination point for NADP(+).

This sequence belongs to the glyceraldehyde-3-phosphate dehydrogenase family. As to quaternary structure, homotetramer. Component of a complex that contains two dimers of PRK, two tetramers of GAPDH and CP12. CP12 associates with GAPDH, causing its conformation to change. This GAPDH/CP12 complex binds PRK to form a half-complex (one unit). This unit probably dimerizes due partially to interactions between the enzymes of each unit.

Its subcellular location is the plastid. The protein resides in the chloroplast. The enzyme catalyses D-glyceraldehyde 3-phosphate + phosphate + NADP(+) = (2R)-3-phospho-glyceroyl phosphate + NADPH + H(+). It participates in carbohydrate biosynthesis; Calvin cycle. This chain is Glyceraldehyde-3-phosphate dehydrogenase A, chloroplastic (GAPA), found in Chlamydomonas reinhardtii (Chlamydomonas smithii).